A 153-amino-acid chain; its full sequence is Large ribosomal subunit protein uL15 (153 aa).

Residues 1–40 (MTDKKRRQRGSRTHGGGTHKNRRGAGNRGGRGRAGRKKHE) are compositionally biased toward basic residues. Residues 1–60 (MTDKKRRQRGSRTHGGGTHKNRRGAGNRGGRGRAGRKKHEQHNYEDVGKSGFKRPEKTDR) are disordered. Residues 41–60 (QHNYEDVGKSGFKRPEKTDR) are compositionally biased toward basic and acidic residues.

This sequence belongs to the universal ribosomal protein uL15 family. Part of the 50S ribosomal subunit.

In terms of biological role, binds to the 23S rRNA. This Halobacterium salinarum (strain ATCC 29341 / DSM 671 / R1) protein is Large ribosomal subunit protein uL15.